Consider the following 215-residue polypeptide: CASP-like protein 1E1 (215 aa).

Over 1 to 51 the chain is Cytoplasmic; it reads MESSRGKPGLNGSGGGAAAFDYSSRRGYYTGAGAALPPLAAGSRAPPVDPC. The chain crosses the membrane as a helical span at residues 52–72; it reads CVVLRVFVLLGTLASAVVMAA. At 73 to 103 the chain is on the extracellular side; it reads DRQSTTVQIAAGEELAPPLRVPVTAKWTYSS. A helical membrane pass occupies residues 104–124; it reads AFVYFVVANAMVFAFSAAALA. At 125-130 the chain is on the cytoplasmic side; it reads AVRRRS. A helical transmembrane segment spans residues 131 to 151; it reads AVVPVMVGDLVAMALLFSAVG. Topologically, residues 152 to 185 are extracellular; that stretch reads AAAQFGLLGERGNAHVRWAKVCDVYGPFCERAMA. Residues 186–206 form a helical membrane-spanning segment; sequence AVVVALIAAFADLVLLMLTIL. The Cytoplasmic portion of the chain corresponds to 207–215; that stretch reads TIHKASSYY.

It belongs to the Casparian strip membrane proteins (CASP) family. As to quaternary structure, homodimer and heterodimers.

The protein localises to the cell membrane. The chain is CASP-like protein 1E1 from Oryza sativa subsp. japonica (Rice).